We begin with the raw amino-acid sequence, 634 residues long: Serine/threonine kinase NLK (634 aa).

A Protein kinase domain is found at 240-531 (SQPDRPIGYG…VEEALQHRYL (292 aa)). ATP is bound by residues 246-254 (IGYGAFGVV) and Lys-269. Asp-366 serves as the catalytic Proton acceptor.

The protein belongs to the protein kinase superfamily. CMGC Ser/Thr protein kinase family. MAP kinase subfamily. Component of the beta-catenin-lit-1 complex (also called the lit-1/wrm-1 complex or the wrm-1/lit-1 kinase complex) at least composed of lit-1 and wrm-1. Interacts with wrm-1 (via N-terminus); the interaction is direct and activates lit-1 kinase activity which leads to the phosphorylation of pop-1. This promotes pop-1 interaction with par-5 and translocation of pop-1 from the nucleus to the cytoplasm. Interacts with pop-1 (when phosphorylated on 'Ser-118' and 'Ser-127'); the interaction is dependent on the beta-catenin-lit-1 complex. Mg(2+) is required as a cofactor. In terms of tissue distribution, expressed in the pharynx and seam and vulval cells.

The protein resides in the cytoplasm. It localises to the cell cortex. The protein localises to the nucleus. It carries out the reaction L-seryl-[protein] + ATP = O-phospho-L-seryl-[protein] + ADP + H(+). The enzyme catalyses L-threonyl-[protein] + ATP = O-phospho-L-threonyl-[protein] + ADP + H(+). Functionally, has a role in the Wnt signaling pathway controlling the asymmetry of cell divisions during embryogenesis. Operates in the AB and EMS cell lineages influencing cell specification. Required for body wall muscle development, endoderm development, pop-1 asymmetry and T-cell division asymmetry. Component of the beta-catenin-lit-1 complex which promotes the phosphorylation, down-regulation and subcellular relocation of pop-1. Regulates plp-1 nuclear localization in embryos. Plays a role in male tail tip morphogenesis. This chain is Serine/threonine kinase NLK, found in Caenorhabditis elegans.